The sequence spans 451 residues: Tapasin-related protein (451 aa).

The N-terminal stretch at 1 to 20 (MGLEPSWYLLLCLAVSGAAG) is a signal peptide. Residues 21–412 (TDPPTAPTTA…RVLPNPEQRG (392 aa)) are Lumenal-facing. An Ig-like V-type domain is found at 196–301 (FQVTSETQTL…TSLYQAQQIM (106 aa)). Intrachain disulfides connect Cys217–Cys288 and Cys326–Cys387. Asn270 and Asn277 each carry an N-linked (GlcNAc...) asparagine glycan. An Ig-like C1-type domain is found at 302 to 399 (PLNILAPPKI…AHVSLEEPLT (98 aa)). A helical membrane pass occupies residues 413–433 (TLGVIFASIIFLSALLLFLGL). Residues 434 to 451 (HRQQASSSRSTRPMRHSG) are Cytoplasmic-facing.

As to quaternary structure, interacts with peptide-free HLA-A*02-B2M complexes or those loaded with low affinity peptides, likely facilitating peptide exchange onto higher affinity peptides. Interacts with MR1 in a ligand-independent way; this interaction may stabilize MR1 pool and facilitate ligand loading and dissociation. As to expression, widely expressed.

It localises to the cell membrane. It is found in the endoplasmic reticulum membrane. The protein resides in the microsome membrane. The protein localises to the golgi apparatus membrane. Component of the antigen processing and presentation pathway, which binds to MHC class I coupled with beta2-microglobulin/B2M. Association between TAPBPR and MHC class I occurs in the absence of a functional peptide-loading complex (PLC). Expression seems to slow down and down-regulate MHC class I surface expression. The chain is Tapasin-related protein (Tapbpl) from Mus musculus (Mouse).